A 483-amino-acid polypeptide reads, in one-letter code: Altronate oxidoreductase (483 aa).

18–29 (IIQFGEGNFLRA) serves as a coordination point for NAD(+).

It belongs to the mannitol dehydrogenase family. UxaB subfamily.

It carries out the reaction D-altronate + NAD(+) = keto-D-tagaturonate + NADH + H(+). It functions in the pathway carbohydrate metabolism; pentose and glucuronate interconversion. In Enterobacter sp. (strain 638), this protein is Altronate oxidoreductase.